The chain runs to 517 residues: Ribonuclease Y (517 aa).

The chain crosses the membrane as a helical span at residues M1–V21. The KH domain occupies L207–D273. One can recognise an HD domain in the interval A333–A426.

This sequence belongs to the RNase Y family.

It localises to the cell membrane. Functionally, endoribonuclease that initiates mRNA decay. This is Ribonuclease Y from Campylobacter jejuni subsp. jejuni serotype O:2 (strain ATCC 700819 / NCTC 11168).